A 266-amino-acid chain; its full sequence is Translation initiation factor 2 subunit alpha (266 aa).

In terms of domain architecture, S1 motif spans 12–83 (GEILIATVKQ…RKGTVDVSLK (72 aa)).

Belongs to the eIF-2-alpha family. In terms of assembly, heterotrimer composed of an alpha, a beta and a gamma chain.

Functionally, eIF-2 functions in the early steps of protein synthesis by forming a ternary complex with GTP and initiator tRNA. In Saccharolobus islandicus (strain Y.N.15.51 / Yellowstone #2) (Sulfolobus islandicus), this protein is Translation initiation factor 2 subunit alpha.